A 379-amino-acid chain; its full sequence is Wnt inhibitory factor 1 (379 aa).

The N-terminal stretch at 1-28 (MARRRAFPAFALRLWSILPCLLLLRADA) is a signal peptide. The 140-residue stretch at 38–177 (LWIDAHQARV…PQNAIFFKTC (140 aa)) folds into the WIF domain. Residue Asn-88 is glycosylated (N-linked (GlcNAc...) asparagine). 7 disulfide bridges follow: Cys-140–Cys-177, Cys-182–Cys-192, Cys-186–Cys-198, Cys-200–Cys-209, Cys-214–Cys-224, Cys-218–Cys-230, and Cys-232–Cys-241. 5 EGF-like domains span residues 178–210 (QQAE…PHCE), 211–242 (KALC…VNCD), 243–271 (KANC…LEGE), 274–306 (ELSK…DLCS), and 307–338 (KPVC…RHCN). A glycan (N-linked (GlcNAc...) asparagine) is linked at Asn-245. 8 cysteine pairs are disulfide-bonded: Cys-246–Cys-256, Cys-250–Cys-262, Cys-278–Cys-288, Cys-282–Cys-294, Cys-296–Cys-305, Cys-310–Cys-320, Cys-314–Cys-326, and Cys-328–Cys-337. The segment at 348–379 (APRPAGAGLERHTPSLKKAEDRRDPPESNYIW) is disordered. A compositionally biased stretch (basic and acidic residues) spans 356-373 (LERHTPSLKKAEDRRDPP).

Interacts with MYOC. In terms of tissue distribution, expression highest in heart and lung. Lower in brain and eye.

It localises to the secreted. Functionally, binds to WNT proteins and inhibits their activities. May be involved in mesoderm segmentation. The protein is Wnt inhibitory factor 1 (Wif1) of Mus musculus (Mouse).